We begin with the raw amino-acid sequence, 100 residues long: Integration host factor subunit alpha (100 aa).

Residues 53–72 (FDLRDKRQRPGRNPKTGEEI) form a disordered region.

It belongs to the bacterial histone-like protein family. In terms of assembly, heterodimer of an alpha and a beta chain.

This protein is one of the two subunits of integration host factor, a specific DNA-binding protein that functions in genetic recombination as well as in transcriptional and translational control. This chain is Integration host factor subunit alpha, found in Pseudomonas putida (strain ATCC 700007 / DSM 6899 / JCM 31910 / BCRC 17059 / LMG 24140 / F1).